Here is a 190-residue protein sequence, read N- to C-terminus: Copper-binding lipoprotein NosL (190 aa).

The N-terminal stretch at 1-23 (MNALHRIGAGTLLAVLLAFGLTG) is a signal peptide. Residue C24 is the site of N-palmitoyl cysteine attachment. A lipid anchor (S-diacylglycerol cysteine) is attached at C24. Residues 170–190 (MQHGGMHDHAPNGAHNAHAGH) form a disordered region. A compositionally biased stretch (low complexity) spans 180 to 190 (PNGAHNAHAGH).

It belongs to the NosL family. As to quaternary structure, monomer.

Its subcellular location is the cell membrane. May act as a metallochaperone involved in nitrous oxide reductase assembly. Specifically binds Cu(+). This chain is Copper-binding lipoprotein NosL, found in Stutzerimonas stutzeri (Pseudomonas stutzeri).